Reading from the N-terminus, the 534-residue chain is EH domain-containing protein 1 (534 aa).

Met1 carries the N-acetylmethionine modification. The 232-residue stretch at Phe55 to Pro286 folds into the Dynamin-type G domain. Positions Gly65–Thr72 are G1 motif. Position 65–72 (Gly65–Thr72) interacts with ATP. A G2 motif region spans residues Glu91–Pro92. The segment at Asp153–Gly156 is G3 motif. Residues Asp198–Gln227 adopt a coiled-coil conformation. The G4 motif stretch occupies residues Asn219–Asp222. Lys220 lines the ATP pocket. Residue Ile243 is a region of interest, G5 motif. An ATP-binding site is contributed by Trp258. Residues Asp444 to Arg532 form the EH domain. A Phosphoserine modification is found at Ser456. Residues Leu476–Lys511 enclose the EF-hand domain. Residues Asp489, Asp491, Asp493, and Glu500 each contribute to the Ca(2+) site.

It belongs to the TRAFAC class dynamin-like GTPase superfamily. Dynamin/Fzo/YdjA family. EHD subfamily. Homooligomer, and heterooligomer with EHD2, EHD3 and EHD4, ATP-binding is required for heterooligomerization. Interacts (via EH domain) with MICALL1 (via NPF1 motif); the interaction is direct and recruits EHD1 to membranes. Interacts with RAB35; the interaction is indirect through MICALL1 and recruits EHD1 to membranes. Interacts (via EH domain) with PACSIN2 (via NPF motifs); regulates localization to tubular recycling endosome membranes. Interacts with PACSIN1. Interacts with RAB8A. Interacts with FER1L5 (via second C2 domain). Interacts with MYOF. Interacts with ZFYVE20. Interacts (via EH domain) with RAB11FIP2.

The protein resides in the recycling endosome membrane. It is found in the early endosome membrane. It localises to the cell membrane. The protein localises to the cell projection. Its subcellular location is the cilium membrane. Functionally, ATP- and membrane-binding protein that controls membrane reorganization/tubulation upon ATP hydrolysis. Acts in early endocytic membrane fusion and membrane trafficking of recycling endosomes. Recruited to endosomal membranes upon nerve growth factor stimulation, indirectly regulates neurite outgrowth. Plays a role in myoblast fusion. Involved in the unidirectional retrograde dendritic transport of endocytosed BACE1 and in efficient sorting of BACE1 to axons implicating a function in neuronal APP processing. Plays a role in the formation of the ciliary vesicle (CV), an early step in cilium biogenesis. Proposed to be required for the fusion of distal appendage vesicles (DAVs) to form the CV by recruiting SNARE complex component SNAP29. Is required for recruitment of transition zone proteins CEP290, RPGRIP1L, TMEM67 and B9D2, and of IFT20 following DAV reorganization before Rab8-dependent ciliary membrane extension. Required for the loss of CCP110 form the mother centriole essential for the maturation of the basal body during ciliogenesis. In Bos taurus (Bovine), this protein is EH domain-containing protein 1.